The sequence spans 478 residues: Sulfate adenylyltransferase subunit 1 (478 aa).

In terms of domain architecture, tr-type G spans 28–244 (KTMLRFLTCG…LESVDVVNAS (217 aa)). The segment at 37–44 (GSVDDGKS) is G1. 37 to 44 (GSVDDGKS) serves as a coordination point for GTP. The tract at residues 95 to 99 (GITID) is G2. Residues 116–119 (DTPG) are G3. Residues 116–120 (DTPGH) and 171–174 (NKMD) each bind GTP. The interval 171 to 174 (NKMD) is G4. The segment at 209-211 (SAL) is G5.

This sequence belongs to the TRAFAC class translation factor GTPase superfamily. Classic translation factor GTPase family. CysN/NodQ subfamily. As to quaternary structure, heterodimer composed of CysD, the smaller subunit, and CysN.

It carries out the reaction sulfate + ATP + H(+) = adenosine 5'-phosphosulfate + diphosphate. Its pathway is sulfur metabolism; hydrogen sulfide biosynthesis; sulfite from sulfate: step 1/3. With CysD forms the ATP sulfurylase (ATPS) that catalyzes the adenylation of sulfate producing adenosine 5'-phosphosulfate (APS) and diphosphate, the first enzymatic step in sulfur assimilation pathway. APS synthesis involves the formation of a high-energy phosphoric-sulfuric acid anhydride bond driven by GTP hydrolysis by CysN coupled to ATP hydrolysis by CysD. This chain is Sulfate adenylyltransferase subunit 1, found in Yersinia enterocolitica serotype O:8 / biotype 1B (strain NCTC 13174 / 8081).